A 501-amino-acid polypeptide reads, in one-letter code: Lysine--tRNA ligase (501 aa).

Mg(2+) is bound by residues Glu411 and Glu418.

The protein belongs to the class-II aminoacyl-tRNA synthetase family. As to quaternary structure, homodimer. Mg(2+) is required as a cofactor.

It localises to the cytoplasm. It catalyses the reaction tRNA(Lys) + L-lysine + ATP = L-lysyl-tRNA(Lys) + AMP + diphosphate. The sequence is that of Lysine--tRNA ligase from Magnetococcus marinus (strain ATCC BAA-1437 / JCM 17883 / MC-1).